Here is a 180-residue protein sequence, read N- to C-terminus: Small ribosomal subunit protein uS5 (180 aa).

One can recognise an S5 DRBM domain in the interval 13–76; that stretch reads LEERVVQINR…EAAKKNLIRV (64 aa).

This sequence belongs to the universal ribosomal protein uS5 family. As to quaternary structure, part of the 30S ribosomal subunit. Contacts proteins S4 and S8.

Its function is as follows. With S4 and S12 plays an important role in translational accuracy. In terms of biological role, located at the back of the 30S subunit body where it stabilizes the conformation of the head with respect to the body. In Roseiflexus sp. (strain RS-1), this protein is Small ribosomal subunit protein uS5.